Reading from the N-terminus, the 440-residue chain is Tubulin beta-3 chain (440 aa).

GTP contacts are provided by Gln-2, Glu-60, Ser-129, Gly-133, Thr-134, Gly-135, Asn-195, and Asn-217. Glu-60 provides a ligand contact to Mg(2+). The interval 411–440 (SEYQQYQDATADEEGEYEDEEEEEPEHGYE) is disordered. The span at 420 to 440 (TADEEGEYEDEEEEEPEHGYE) shows a compositional bias: acidic residues.

Belongs to the tubulin family. Dimer of alpha and beta chains. A typical microtubule is a hollow water-filled tube with an outer diameter of 25 nm and an inner diameter of 15 nM. Alpha-beta heterodimers associate head-to-tail to form protofilaments running lengthwise along the microtubule wall with the beta-tubulin subunit facing the microtubule plus end conferring a structural polarity. Microtubules usually have 13 protofilaments but different protofilament numbers can be found in some organisms and specialized cells. Requires Mg(2+) as cofactor.

The protein resides in the cytoplasm. It localises to the cytoskeleton. Tubulin is the major constituent of microtubules, a cylinder consisting of laterally associated linear protofilaments composed of alpha- and beta-tubulin heterodimers. Microtubules grow by the addition of GTP-tubulin dimers to the microtubule end, where a stabilizing cap forms. Below the cap, tubulin dimers are in GDP-bound state, owing to GTPase activity of alpha-tubulin. This is Tubulin beta-3 chain (TUBB3) from Pisum sativum (Garden pea).